Consider the following 102-residue polypeptide: MICOS complex subunit MIC12 (102 aa).

A helical membrane pass occupies residues 4–26 (VLKLTSVTLAASSLAAAGYFYAF).

The protein belongs to the MICOS complex subunit Mic12 family. As to quaternary structure, component of the mitochondrial contact site and cristae organizing system (MICOS) complex.

The protein localises to the mitochondrion inner membrane. Functionally, component of the MICOS complex, a large protein complex of the mitochondrial inner membrane that plays crucial roles in the maintenance of crista junctions, inner membrane architecture, and formation of contact sites to the outer membrane. This is MICOS complex subunit MIC12 (AIM5) from Lachancea thermotolerans (strain ATCC 56472 / CBS 6340 / NRRL Y-8284) (Yeast).